A 398-amino-acid polypeptide reads, in one-letter code: MRPGGALLALLASLLLLLLLRLLWCPADAPGRARILVEESREATHGTPAALRTLRSPATAVPRATNSTYLNEKSLHLTEKCKNLQYGIESFSNKTKGYSENDYLQIITDIQSCPWKRQAEEYANFRAKLASCCDAVQNFVVSQNNTPVGTNMSYEVESKKEIPIKKNIFHMFPVSQPFVDYPYNQCAVVGNGGILNKSLCGTEIDKSDFVFRCNLPPTTGDVSKDVGSKTNLVTINPSIITLKYGNLKEKKALFLEDIATYGEAFFLLPAFSFRANTGTSFKVYYTLEESKARQKVLFFHPKYLKDLALFWRTKGVTAYRLSTGLMITSVAVELCKNVKLYGFWPFSKTVEDIPVSHHYYDNKLPKHGFHQMPKEYSQILQLHMKGILKLQFSKCEVA.

Topologically, residues methionine 1–proline 3 are cytoplasmic. A helical; Signal-anchor for type II membrane protein transmembrane segment spans residues glycine 4–tryptophan 24. Residues cysteine 25–alanine 398 are Lumenal-facing. Residues asparagine 66, asparagine 93, asparagine 151, and asparagine 196 are each glycosylated (N-linked (GlcNAc...) asparagine). 2 disulfide bridges follow: cysteine 186-cysteine 335 and cysteine 200-cysteine 395. Substrate is bound by residues asparagine 214, asparagine 236–serine 238, and serine 322–glycine 324. Histidine 370 functions as the Proton donor/acceptor in the catalytic mechanism.

It belongs to the glycosyltransferase 29 family.

It is found in the golgi apparatus membrane. The enzyme catalyses a ganglioside GM3 + CMP-N-acetyl-beta-neuraminate = a ganglioside GD3 + CMP + H(+). The catalysed reaction is a ganglioside GM3 (d18:1(4E)) + CMP-N-acetyl-beta-neuraminate = a ganglioside GD3 (d18:1(4E)) + CMP + H(+). It carries out the reaction a ganglioside GD1a (d18:1(4E)) + CMP-N-acetyl-beta-neuraminate = a ganglioside GT1a (d18:1(4E)) + CMP + H(+). It catalyses the reaction a ganglioside GD1a + CMP-N-acetyl-beta-neuraminate = a ganglioside GT1a + CMP + H(+). The enzyme catalyses a ganglioside GM1b (d18:1(4E)) + CMP-N-acetyl-beta-neuraminate = a ganglioside GD1c (d18:1(4E)) + CMP + H(+). The catalysed reaction is a ganglioside GM1b + CMP-N-acetyl-beta-neuraminate = a ganglioside GD1c + CMP + H(+). It carries out the reaction a ganglioside GM4 (d18:1(4E)) + CMP-N-acetyl-beta-neuraminate = an N-acetyl-alpha-neuraminosyl-(2-&gt;8)-N-acetyl-alpha-neuraminosyl-(2-&gt;3)-beta-D-galactosyl-(1&lt;-&gt;1')-N-acylsphing-4-enine + CMP + H(+). It catalyses the reaction N-acetyl-alpha-neuraminosyl-(2-&gt;3)-beta-D-galactosyl-(1&lt;-&gt;1')-ceramide + CMP-N-acetyl-beta-neuraminate = N-acetyl-alpha-neuraminosyl-(2-&gt;8)-N-acetyl-alpha-neuraminosyl-(2-&gt;3)-beta-D-galactosyl-(1&lt;-&gt;1')-ceramide + CMP + H(+). The enzyme catalyses a ganglioside GT1b (d18:1(4E)) + CMP-N-acetyl-beta-neuraminate = a ganglioside GQ1b (d18:1(4E)) + CMP + H(+). The catalysed reaction is a ganglioside GT1b + CMP-N-acetyl-beta-neuraminate = a ganglioside GQ1b + CMP + H(+). The protein operates within protein modification; protein glycosylation. Alpha-2,8-sialyltransferase that prefers O-glycans to N-glycans or glycolipids as acceptor substrates. The minimal acceptor substrate is the NeuAc-alpha-2,3(6)-Gal sequence at the non-reducing end of their carbohydrate groups. The sequence is that of Alpha-2,8-sialyltransferase 8F (ST8SIA6) from Pan troglodytes (Chimpanzee).